Consider the following 158-residue polypeptide: Glutamyl-tRNA(Gln) amidotransferase subunit C, mitochondrial (158 aa).

The protein belongs to the GatC family. In terms of assembly, subunit of the heterotrimeric GatCAB amidotransferase (AdT) complex, composed of A, B and C subunits.

The protein localises to the mitochondrion. The catalysed reaction is L-glutamyl-tRNA(Gln) + L-glutamine + ATP + H2O = L-glutaminyl-tRNA(Gln) + L-glutamate + ADP + phosphate + H(+). Allows the formation of correctly charged Gln-tRNA(Gln) through the transamidation of misacylated Glu-tRNA(Gln) in the mitochondria. The reaction takes place in the presence of glutamine and ATP through an activated gamma-phospho-Glu-tRNA(Gln). This is Glutamyl-tRNA(Gln) amidotransferase subunit C, mitochondrial from Drosophila grimshawi (Hawaiian fruit fly).